The chain runs to 147 residues: Protein SprT-like (147 aa).

Positions 9–142 (AKVKEISLTY…CGKCRGKLIL (134 aa)) constitute a SprT-like domain. Histidine 65 contributes to the Zn(2+) binding site. Residue glutamate 66 is part of the active site. Histidine 69 serves as a coordination point for Zn(2+).

The protein belongs to the SprT family. Requires Zn(2+) as cofactor.

The protein resides in the cytoplasm. This is Protein SprT-like (yciD) from Lactococcus lactis subsp. lactis (strain IL1403) (Streptococcus lactis).